Consider the following 233-residue polypeptide: Putative N-acetylmannosamine-6-phosphate 2-epimerase (233 aa).

The protein belongs to the NanE family.

It carries out the reaction an N-acyl-D-glucosamine 6-phosphate = an N-acyl-D-mannosamine 6-phosphate. It functions in the pathway amino-sugar metabolism; N-acetylneuraminate degradation; D-fructose 6-phosphate from N-acetylneuraminate: step 3/5. Functionally, converts N-acetylmannosamine-6-phosphate (ManNAc-6-P) to N-acetylglucosamine-6-phosphate (GlcNAc-6-P). The protein is Putative N-acetylmannosamine-6-phosphate 2-epimerase of Yersinia pestis bv. Antiqua (strain Antiqua).